We begin with the raw amino-acid sequence, 850 residues long: Protein stoned-A (850 aa).

Positions 1 to 16 (MLKLPKGLKKKKKKSK) are enriched in basic residues. 2 disordered regions span residues 1-95 (MLKL…AAGG) and 125-164 (KESFYQRLPSAAEKKKQKEEEAARLEAEQQEREKQRLGQI). Residues 26 to 290 (ELEQYKRDLK…QNLLLSESIE (265 aa)) form an interaction with Syt region. Residues 28–38 (EQYKRDLKAKQ) are compositionally biased toward basic and acidic residues. The span at 78-91 (ILNAQQQLSDQNQG) shows a compositional bias: polar residues. Positions 136-164 (AEKKKQKEEEAARLEAEQQEREKQRLGQI) are enriched in basic and acidic residues. Residues 224–226 (DPF) carry the DPF 1 motif. 2 disordered regions span residues 345–375 (EEEELEQKGRENQLLNPDLSEFDSLKDEEDD) and 412–498 (GSWA…PPFL). Pro residues predominate over residues 431–440 (PPPPVRPPTG). The segment covering 451-462 (SEDEEENPEDDP) has biased composition (acidic residues). Short sequence motifs (DPF) lie at residues 461–463 (DPF) and 535–537 (DPF). Disordered regions lie at residues 573 to 610 (HSLSDQDFDPRADQKEPAAPQVKLEQKETDFDTAQRKS), 634 to 673 (GNELGASKKPLTPYYAPSDNRLQEREREAEDVDPFDTSHV), 738 to 760 (RKKLTNSGGSGKSEEDIDPFDTS), and 800 to 825 (LGLGDKVLTPSTHSRPSLPAQDIDPF). 2 stretches are compositionally biased toward basic and acidic residues: residues 574-588 (SLSDQDFDPRADQKE) and 596-607 (LEQKETDFDTAQ). 3 consecutive short sequence motifs (DPF) follow at residues 666-668 (DPF), 755-757 (DPF), and 823-825 (DPF).

Interacts with the second C2 domain of Syt.

It localises to the cytoplasm. The protein localises to the synapse. Its subcellular location is the cytoplasmic vesicle. The protein resides in the secretory vesicle. It is found in the synaptic vesicle. In terms of biological role, adapter protein involved in endocytic recycling of synaptic vesicles membranes. May act by mediating the retrieval of synaptotagmin protein Syt from the plasma membrane, thereby facilitating the internalization of multiple synaptic vesicles from the plasma membrane. This chain is Protein stoned-A (stnA), found in Drosophila melanogaster (Fruit fly).